We begin with the raw amino-acid sequence, 122 residues long: Small ribosomal subunit protein bS6 (122 aa).

The protein belongs to the bacterial ribosomal protein bS6 family.

Functionally, binds together with bS18 to 16S ribosomal RNA. The protein is Small ribosomal subunit protein bS6 of Neisseria gonorrhoeae (strain ATCC 700825 / FA 1090).